A 472-amino-acid chain; its full sequence is Argininosuccinate lyase (472 aa).

This sequence belongs to the lyase 1 family. Argininosuccinate lyase subfamily.

It is found in the cytoplasm. The catalysed reaction is 2-(N(omega)-L-arginino)succinate = fumarate + L-arginine. Its pathway is amino-acid biosynthesis; L-arginine biosynthesis; L-arginine from L-ornithine and carbamoyl phosphate: step 3/3. This Polynucleobacter necessarius subsp. necessarius (strain STIR1) protein is Argininosuccinate lyase.